The primary structure comprises 293 residues: N-acetylneuraminate lyase (293 aa).

S48 and S49 together coordinate aceneuramate. Y137 serves as the catalytic Proton donor. K165 (schiff-base intermediate with substrate) is an active-site residue. Aceneuramate contacts are provided by T167, G189, D191, E192, and S208.

It belongs to the DapA family. NanA subfamily. In terms of assembly, homotetramer.

It localises to the cytoplasm. It carries out the reaction aceneuramate = aldehydo-N-acetyl-D-mannosamine + pyruvate. It functions in the pathway amino-sugar metabolism; N-acetylneuraminate degradation; D-fructose 6-phosphate from N-acetylneuraminate: step 1/5. Its function is as follows. Catalyzes the reversible aldol cleavage of N-acetylneuraminic acid (sialic acid; Neu5Ac) to form pyruvate and N-acetylmannosamine (ManNAc) via a Schiff base intermediate. The chain is N-acetylneuraminate lyase from Staphylococcus aureus (strain Mu3 / ATCC 700698).